The following is a 174-amino-acid chain: Large ribosomal subunit protein uL16 (174 aa).

It belongs to the universal ribosomal protein uL16 family.

In Archaeoglobus fulgidus (strain ATCC 49558 / DSM 4304 / JCM 9628 / NBRC 100126 / VC-16), this protein is Large ribosomal subunit protein uL16.